The chain runs to 30 residues: Cysteine-rich venom protein mossambin (30 aa).

Residues 1 to 30 form a disordered region; the sequence is NVDFNSESTRRKKKQNEIVDLHNSLRRTVN.

The protein belongs to the CRISP family. Contains 8 disulfide bonds. In terms of tissue distribution, expressed by the venom gland.

It is found in the secreted. In terms of biological role, inhibits calcium-activated potassium channels (KCa), voltage-gated potassium channel (Kv), and the calcium release channel/ryanodine receptor (RyR). The chain is Cysteine-rich venom protein mossambin from Naja mossambica (Mozambique spitting cobra).